We begin with the raw amino-acid sequence, 288 residues long: Ankyrin repeat and SOCS box protein 8 (288 aa).

At Ser17 the chain carries Phosphoserine. ANK repeat units follow at residues 52-81, 85-113, 117-146, and 150-179; these read GTLK…EVNA, YNRT…NPNA, NRDT…SVNA, and NNDT…EVRV. The SOCS box domain maps to 235-288; sequence QLCEKLTVLCSAPGTLKTLARYAVRRSLGLQYLPDAVKGLPLPASLKEYLLLLE.

This sequence belongs to the ankyrin SOCS box (ASB) family. Interacts with TBK1; this interaction promotes TBK1 proteasomal degradation. In terms of processing, phosphorylated by TBK1.

It is found in the cytoplasm. It functions in the pathway protein modification; protein ubiquitination. In terms of biological role, may be a substrate-recognition component of a SCF-like ECS (Elongin-Cullin-SOCS-box protein) E3 ubiquitin-protein ligase complex which mediates the ubiquitination and subsequent proteasomal degradation of target proteins. Inhibits IFN-beta production through the IRF3 signaling pathway by targeting TBK1 via 'Lys-48'-linked ubiquitination, leading to its proteasomal degradation. The sequence is that of Ankyrin repeat and SOCS box protein 8 (ASB8) from Macaca fascicularis (Crab-eating macaque).